The primary structure comprises 625 residues: Protein LEO1 homolog (625 aa).

Disordered regions lie at residues 1-214 (MVKG…DMVL) and 415-625 (EREK…SDED). Composition is skewed to acidic residues over residues 40 to 55 (DEAE…GEAE) and 63 to 80 (EAES…PGES). Composition is skewed to basic and acidic residues over residues 97–113 (SEAR…EHGG), 121–137 (QEVV…KHYE), and 182–197 (EYVR…RSPI). At S203 the chain carries Phosphoserine. A compositionally biased stretch (basic and acidic residues) spans 415-425 (EREKEKREKAE). Residues 415 to 539 (EREKEKREKA…ETEEEEEEKS (125 aa)) are a coiled coil. The span at 426–436 (SQNLKASTKLS) shows a compositional bias: polar residues. Over residues 471 to 491 (YRSNRGYEEDLEAEAQRERRI) the composition is skewed to basic and acidic residues. Residues 492–501 (LNAKKSHKGI) show a composition bias toward basic residues. Over residues 523-537 (EREESEYETEEEEEE) the composition is skewed to acidic residues. The span at 538-547 (KSPARGRGKD) shows a compositional bias: basic and acidic residues. Residues S548, S570, S600, S605, and S622 each carry the phosphoserine modification. The segment covering 548 to 561 (SEDEYEEDAEEDEE) has biased composition (acidic residues).

This sequence belongs to the LEO1 family. As to quaternary structure, component of the nuclear PAF1 complex (PAF1C), which consists of VIP2/ELF7/PAF1, VIP3/SKI8/WDR61, VIP4/LEO1, VIP5/RTF1, VIP6/ELF8/CTR9 and CDC73. Interacts with VIP3 and VIP6. As to expression, expressed in roots, shoot apices, stems, cauline leaves, inflorescence apices and flowers.

It is found in the nucleus. Its function is as follows. Component of the PAF1 complex (PAF1C) which is involved in histone modifications such as methylation on histone H3 'Lys-4' (H3K4me3). Involved in regulation of flowering time. Required for the expression of the flowering repressor and MADS box gene FLC. Involved in the control of seed dormancy and germination. The polypeptide is Protein LEO1 homolog (Arabidopsis thaliana (Mouse-ear cress)).